The sequence spans 387 residues: Low specificity L-threonine aldolase (387 aa).

Residue Lys-213 is modified to N6-(pyridoxal phosphate)lysine. Lys-228 is covalently cross-linked (Glycyl lysine isopeptide (Lys-Gly) (interchain with G-Cter in ubiquitin)). Phosphoserine is present on residues Ser-367 and Ser-369. At Thr-370 the chain carries Phosphothreonine.

This sequence belongs to the threonine aldolase family. As to quaternary structure, homotetramer. The cofactor is pyridoxal 5'-phosphate.

The enzyme catalyses L-threonine = acetaldehyde + glycine. It catalyses the reaction L-allo-threonine = acetaldehyde + glycine. It functions in the pathway amino-acid biosynthesis; glycine biosynthesis; glycine from L-allo-threonine: step 1/1. Its pathway is amino-acid degradation; L-threonine degradation via aldolase pathway; acetaldehyde and glycine from L-threonine: step 1/1. Functionally, catalyzes the cleavage of L-allo-threonine and L-threonine to glycine and acetaldehyde. The chain is Low specificity L-threonine aldolase (GLY1) from Saccharomyces cerevisiae (strain ATCC 204508 / S288c) (Baker's yeast).